The following is a 356-amino-acid chain: Thiamine thiazole synthase, chloroplastic (356 aa).

A chloroplast-targeting transit peptide spans 1 to 51 (MAAMASTAFAPSVSSTTNKLFDSSFHGAPMSPSLLRLQPIKSSRPNNLSIS). Residues Ala-101, 121–122 (EQ), Gly-129, and Ala-194 each bind substrate. Cys-223 bears the 2,3-didehydroalanine (Cys) mark. Substrate-binding positions include Asp-225, His-240, Met-292, and 302-304 (RMG).

Belongs to the THI4 family. In terms of assembly, homooctamer. It depends on Fe cation as a cofactor. In terms of processing, during the catalytic reaction, a sulfide is transferred from Cys-223 to a reaction intermediate, generating a dehydroalanine residue.

It is found in the plastid. The protein localises to the chloroplast. The enzyme catalyses [ADP-thiazole synthase]-L-cysteine + glycine + NAD(+) = [ADP-thiazole synthase]-dehydroalanine + ADP-5-ethyl-4-methylthiazole-2-carboxylate + nicotinamide + 3 H2O + 2 H(+). In terms of biological role, involved in biosynthesis of the thiamine precursor thiazole. Catalyzes the conversion of NAD and glycine to adenosine diphosphate 5-(2-hydroxyethyl)-4-methylthiazole-2-carboxylic acid (ADT), an adenylated thiazole intermediate. The reaction includes an iron-dependent sulfide transfer from a conserved cysteine residue of the protein to a thiazole intermediate. The enzyme can only undergo a single turnover, which suggests it is a suicide enzyme. May have additional roles in adaptation to various stress conditions and in DNA damage tolerance. The polypeptide is Thiamine thiazole synthase, chloroplastic (Citrus sinensis (Sweet orange)).